The following is a 187-amino-acid chain: Calmodulin-like protein 1 (187 aa).

Ala-2 is modified (N-acetylalanine). EF-hand domains are found at residues 8–43 (EQIV…LGQN), 44–79 (PTEA…KLRD), 81–116 (DSEE…IGER), and 117–152 (LTDE…KKRR). 19 residues coordinate Ca(2+): Asp-21, Asp-23, Asp-25, Ser-27, Glu-32, Asp-57, Asp-59, Asn-61, Asn-63, Glu-68, Asp-94, Asp-96, Asn-98, Glu-105, Asp-130, Asp-132, Asp-134, Gln-136, and Glu-141. The disordered stretch occupies residues 153–187 (KRIEEKREHDGGSRTKSAGPSAAPASKRGQKCVIL). The span at 154–165 (RIEEKREHDGGS) shows a compositional bias: basic and acidic residues. Low complexity predominate over residues 169–178 (SAGPSAAPAS). Cys-184 is subject to Cysteine methyl ester. A lipid anchor (S-farnesyl cysteine) is attached at Cys-184. A propeptide spans 185–187 (VIL) (removed in mature form).

Belongs to the calmodulin family. As to expression, expressed in roots, etiolated shoots and flowers.

The protein localises to the membrane. Calcium-binding protein that binds and activates CAMK1, a calcium/calmodulin-dependent kinase. The chain is Calmodulin-like protein 1 (CML1) from Oryza sativa subsp. indica (Rice).